The following is a 64-amino-acid chain: DNA gyrase inhibitor YacG (64 aa).

Zn(2+)-binding residues include Cys6, Cys9, Cys25, and Cys29.

Belongs to the DNA gyrase inhibitor YacG family. Interacts with GyrB. It depends on Zn(2+) as a cofactor.

Inhibits all the catalytic activities of DNA gyrase by preventing its interaction with DNA. Acts by binding directly to the C-terminal domain of GyrB, which probably disrupts DNA binding by the gyrase. The sequence is that of DNA gyrase inhibitor YacG from Haemophilus influenzae (strain ATCC 51907 / DSM 11121 / KW20 / Rd).